A 181-amino-acid polypeptide reads, in one-letter code: Nucleoside-triphosphatase THEP1 (181 aa).

ATP-binding positions include 12–19 (GPVGSIKS) and 104–111 (VIVIDEIG).

It belongs to the THEP1 NTPase family.

It catalyses the reaction a ribonucleoside 5'-triphosphate + H2O = a ribonucleoside 5'-diphosphate + phosphate + H(+). Has nucleotide phosphatase activity towards ATP, GTP, CTP, TTP and UTP. May hydrolyze nucleoside diphosphates with lower efficiency. This chain is Nucleoside-triphosphatase THEP1, found in Thermoplasma acidophilum (strain ATCC 25905 / DSM 1728 / JCM 9062 / NBRC 15155 / AMRC-C165).